A 179-amino-acid polypeptide reads, in one-letter code: Large ribosomal subunit protein uL5 (179 aa).

This sequence belongs to the universal ribosomal protein uL5 family. Part of the 50S ribosomal subunit; part of the 5S rRNA/L5/L18/L25 subcomplex. Contacts the 5S rRNA and the P site tRNA. Forms a bridge to the 30S subunit in the 70S ribosome.

Functionally, this is one of the proteins that bind and probably mediate the attachment of the 5S RNA into the large ribosomal subunit, where it forms part of the central protuberance. In the 70S ribosome it contacts protein S13 of the 30S subunit (bridge B1b), connecting the 2 subunits; this bridge is implicated in subunit movement. Contacts the P site tRNA; the 5S rRNA and some of its associated proteins might help stabilize positioning of ribosome-bound tRNAs. This chain is Large ribosomal subunit protein uL5, found in Francisella philomiragia subsp. philomiragia (strain ATCC 25017 / CCUG 19701 / FSC 153 / O#319-036).